Consider the following 189-residue polypeptide: Elongation factor P 2 (189 aa).

This sequence belongs to the elongation factor P family.

The protein localises to the cytoplasm. Its pathway is protein biosynthesis; polypeptide chain elongation. Its function is as follows. Involved in peptide bond synthesis. Stimulates efficient translation and peptide-bond synthesis on native or reconstituted 70S ribosomes in vitro. Probably functions indirectly by altering the affinity of the ribosome for aminoacyl-tRNA, thus increasing their reactivity as acceptors for peptidyl transferase. This chain is Elongation factor P 2, found in Lactobacillus acidophilus (strain ATCC 700396 / NCK56 / N2 / NCFM).